Reading from the N-terminus, the 623-residue chain is Kelch repeat and BTB domain-containing protein 2 (623 aa).

Positions 31–98 constitute a BTB domain; it reads TDIVLIVEGT…AYTGNLAMND (68 aa). A BACK domain is found at 133–229; it reads CVRLLSFADL…IRIDALSEVT (97 aa). Position 300 is a phosphoserine (serine 300). 5 Kelch repeats span residues 317 to 380, 381 to 429, 431 to 469, 470 to 529, and 535 to 581; these read DIYI…CCEG, HIYA…VVHD, IYVMTLNLMYCYFPRSDSWVEMAMRQTSRSFASAAAFGD, KIFY…RAVV, and CVFM…DFRC.

In terms of assembly, component of the BCR(KBTBD2) E3 ubiquitin ligase complex, at least composed of CUL3, KBTBD2 and RBX1. Interacts (via the BTB domain) with CUL3.

The protein operates within protein modification; protein ubiquitination. Substrate-specific adapter of a BCR (BTB-CUL3-RBX1) E3 ubiquitin ligase complex that acts as a regulator of the insulin signaling pathway, modulating insulin sensitivity by limiting PIK3R1/p85alpha abundance in adipocytes. Targets PIK3R1, the regulatory subunit of phosphatidylinositol 3-kinase (PI3K), for 'Lys-48'-linked polyubiquitination and proteasome-mediated degradation. This chain is Kelch repeat and BTB domain-containing protein 2 (KBTBD2), found in Pongo abelii (Sumatran orangutan).